The sequence spans 352 residues: Chorismate synthase (352 aa).

Arg-48 is a binding site for NADP(+). FMN is bound by residues 125 to 127 (RSS), 237 to 238 (NA), Gly-278, 293 to 297 (KPTSS), and Arg-319.

It belongs to the chorismate synthase family. Homotetramer. FMNH2 serves as cofactor.

The enzyme catalyses 5-O-(1-carboxyvinyl)-3-phosphoshikimate = chorismate + phosphate. The protein operates within metabolic intermediate biosynthesis; chorismate biosynthesis; chorismate from D-erythrose 4-phosphate and phosphoenolpyruvate: step 7/7. Its function is as follows. Catalyzes the anti-1,4-elimination of the C-3 phosphate and the C-6 proR hydrogen from 5-enolpyruvylshikimate-3-phosphate (EPSP) to yield chorismate, which is the branch point compound that serves as the starting substrate for the three terminal pathways of aromatic amino acid biosynthesis. This reaction introduces a second double bond into the aromatic ring system. The sequence is that of Chorismate synthase from Francisella tularensis subsp. holarctica (strain FTNF002-00 / FTA).